Consider the following 434-residue polypeptide: MFS-type transporter pynF (434 aa).

The segment covering 1-13 has biased composition (basic and acidic residues); it reads MSHDQRSPSEEVS. The interval 1-34 is disordered; it reads MSHDQRSPSEEVSRTALSKPASESTIVGDGHHPL. 12 consecutive transmembrane segments (helical) span residues 44-64, 84-104, 109-129, 138-158, 171-191, 203-223, 249-269, 280-302, 311-331, 334-354, 375-395, and 402-422; these read WLVV…LNAF, IAWI…VVGP, VGAT…LMLT, LILA…YPTI, IALG…TEII, TVRA…VLII, LLFS…FFYL, VTGA…VLTG, FNVI…LHKI, SGAI…LISL, LMMG…GALL, and WYGF…VTIL.

It belongs to the major facilitator superfamily. Monocarboxylate porter (TC 2.A.1.13) family.

It localises to the cell membrane. Functionally, MFS-type transporter; part of the gene cluster that mediates the biosynthesis of pyranonigrins, a family of antioxidative compounds. May be involved in the secretion of pyranonigrins. This chain is MFS-type transporter pynF, found in Aspergillus niger (strain ATCC MYA-4892 / CBS 513.88 / FGSC A1513).